Reading from the N-terminus, the 370-residue chain is DNA replication and repair protein RecF (370 aa).

Residue Gly30–Thr37 participates in ATP binding.

It belongs to the RecF family. Recruited to foci following DNA damage; probably interacts with RecO.

It localises to the cytoplasm. Its subcellular location is the nucleoid. Its function is as follows. The RecF protein is involved in DNA metabolism; it is required for DNA replication and normal SOS inducibility. RecF binds preferentially to single-stranded, linear DNA. It also seems to bind ATP. Is recruited to repair centers, foci that are the site of double-strand DNA break(s) after RecN and RecO; recruitment may depend on RecO. A positive modulator of RecA. The polypeptide is DNA replication and repair protein RecF (Bacillus subtilis (strain 168)).